A 258-amino-acid chain; its full sequence is Electron transfer flavoprotein beta subunit lysine methyltransferase (258 aa).

Belongs to the methyltransferase superfamily. ETFBKMT family.

It is found in the cytoplasm. The protein resides in the mitochondrion matrix. The catalysed reaction is L-lysyl-[protein] + 3 S-adenosyl-L-methionine = N(6),N(6),N(6)-trimethyl-L-lysyl-[protein] + 3 S-adenosyl-L-homocysteine + 3 H(+). In terms of biological role, protein-lysine methyltransferase that selectively trimethylates the flavoprotein ETFB in mitochondria. Thereby, may negatively regulate the function of ETFB in electron transfer from Acyl-CoA dehydrogenases to the main respiratory chain. The protein is Electron transfer flavoprotein beta subunit lysine methyltransferase of Danio rerio (Zebrafish).